The primary structure comprises 516 residues: Bifunctional purine biosynthesis protein PurH (516 aa).

The MGS-like domain occupies Met1 to Ser146.

This sequence belongs to the PurH family.

It catalyses the reaction (6R)-10-formyltetrahydrofolate + 5-amino-1-(5-phospho-beta-D-ribosyl)imidazole-4-carboxamide = 5-formamido-1-(5-phospho-D-ribosyl)imidazole-4-carboxamide + (6S)-5,6,7,8-tetrahydrofolate. The enzyme catalyses IMP + H2O = 5-formamido-1-(5-phospho-D-ribosyl)imidazole-4-carboxamide. It participates in purine metabolism; IMP biosynthesis via de novo pathway; 5-formamido-1-(5-phospho-D-ribosyl)imidazole-4-carboxamide from 5-amino-1-(5-phospho-D-ribosyl)imidazole-4-carboxamide (10-formyl THF route): step 1/1. Its pathway is purine metabolism; IMP biosynthesis via de novo pathway; IMP from 5-formamido-1-(5-phospho-D-ribosyl)imidazole-4-carboxamide: step 1/1. This Rippkaea orientalis (strain PCC 8801 / RF-1) (Cyanothece sp. (strain PCC 8801)) protein is Bifunctional purine biosynthesis protein PurH.